Here is a 279-residue protein sequence, read N- to C-terminus: DNA repair protein RecO (279 aa).

It belongs to the RecO family.

In terms of biological role, involved in DNA repair and RecF pathway recombination. This Thermosynechococcus vestitus (strain NIES-2133 / IAM M-273 / BP-1) protein is DNA repair protein RecO.